We begin with the raw amino-acid sequence, 75 residues long: UPF0150 protein TM_1313 (75 aa).

Belongs to the UPF0150 family.

This is UPF0150 protein TM_1313 from Thermotoga maritima (strain ATCC 43589 / DSM 3109 / JCM 10099 / NBRC 100826 / MSB8).